The chain runs to 225 residues: Enolase-phosphatase E1 (225 aa).

The protein belongs to the HAD-like hydrolase superfamily. MasA/MtnC family. Monomer. Mg(2+) is required as a cofactor.

The catalysed reaction is 5-methylsulfanyl-2,3-dioxopentyl phosphate + H2O = 1,2-dihydroxy-5-(methylsulfanyl)pent-1-en-3-one + phosphate. It participates in amino-acid biosynthesis; L-methionine biosynthesis via salvage pathway; L-methionine from S-methyl-5-thio-alpha-D-ribose 1-phosphate: step 3/6. It functions in the pathway amino-acid biosynthesis; L-methionine biosynthesis via salvage pathway; L-methionine from S-methyl-5-thio-alpha-D-ribose 1-phosphate: step 4/6. In terms of biological role, bifunctional enzyme that catalyzes the enolization of 2,3-diketo-5-methylthiopentyl-1-phosphate (DK-MTP-1-P) into the intermediate 2-hydroxy-3-keto-5-methylthiopentenyl-1-phosphate (HK-MTPenyl-1-P), which is then dephosphorylated to form the acireductone 1,2-dihydroxy-3-keto-5-methylthiopentene (DHK-MTPene). The sequence is that of Enolase-phosphatase E1 from Pseudomonas aeruginosa (strain LESB58).